The primary structure comprises 212 residues: Imidazole glycerol phosphate synthase subunit HisH (212 aa).

Residues 2-212 enclose the Glutamine amidotransferase type-1 domain; it reads RVVVIDYNGG…ILGNFLRWTS (211 aa). The active-site Nucleophile is C85. Active-site residues include H192 and E194.

In terms of assembly, heterodimer of HisH and HisF.

The protein localises to the cytoplasm. The catalysed reaction is 5-[(5-phospho-1-deoxy-D-ribulos-1-ylimino)methylamino]-1-(5-phospho-beta-D-ribosyl)imidazole-4-carboxamide + L-glutamine = D-erythro-1-(imidazol-4-yl)glycerol 3-phosphate + 5-amino-1-(5-phospho-beta-D-ribosyl)imidazole-4-carboxamide + L-glutamate + H(+). It carries out the reaction L-glutamine + H2O = L-glutamate + NH4(+). The protein operates within amino-acid biosynthesis; L-histidine biosynthesis; L-histidine from 5-phospho-alpha-D-ribose 1-diphosphate: step 5/9. Functionally, IGPS catalyzes the conversion of PRFAR and glutamine to IGP, AICAR and glutamate. The HisH subunit catalyzes the hydrolysis of glutamine to glutamate and ammonia as part of the synthesis of IGP and AICAR. The resulting ammonia molecule is channeled to the active site of HisF. The polypeptide is Imidazole glycerol phosphate synthase subunit HisH (Gluconobacter oxydans (strain 621H) (Gluconobacter suboxydans)).